The sequence spans 495 residues: GTPase Der (495 aa).

2 consecutive EngA-type G domains span residues 3–166 (PVVA…VQDE) and 208–381 (IKLA…ACAT). Residues 9-16 (GRPNVGKS), 56-60 (DTGGI), 118-121 (NKTD), 214-221 (GRPNVGKS), 261-265 (DTAGV), and 326-329 (NKWD) each bind GTP. The KH-like domain occupies 382–466 (RRVSTAMLTR…PIRIQFKEGE (85 aa)).

This sequence belongs to the TRAFAC class TrmE-Era-EngA-EngB-Septin-like GTPase superfamily. EngA (Der) GTPase family. As to quaternary structure, associates with the 50S ribosomal subunit.

GTPase that plays an essential role in the late steps of ribosome biogenesis. This is GTPase Der from Pectobacterium carotovorum subsp. carotovorum (strain PC1).